The chain runs to 109 residues: Large ribosomal subunit protein uL24 (109 aa).

The protein belongs to the universal ribosomal protein uL24 family. As to quaternary structure, part of the 50S ribosomal subunit.

Functionally, one of two assembly initiator proteins, it binds directly to the 5'-end of the 23S rRNA, where it nucleates assembly of the 50S subunit. In terms of biological role, one of the proteins that surrounds the polypeptide exit tunnel on the outside of the subunit. This is Large ribosomal subunit protein uL24 from Rickettsia africae (strain ESF-5).